We begin with the raw amino-acid sequence, 251 residues long: 5'-nucleotidase SurE (251 aa).

D8, D9, S39, and N90 together coordinate a divalent metal cation.

This sequence belongs to the SurE nucleotidase family. It depends on a divalent metal cation as a cofactor.

The protein resides in the cytoplasm. The enzyme catalyses a ribonucleoside 5'-phosphate + H2O = a ribonucleoside + phosphate. Nucleotidase that shows phosphatase activity on nucleoside 5'-monophosphates. This Legionella pneumophila subsp. pneumophila (strain Philadelphia 1 / ATCC 33152 / DSM 7513) protein is 5'-nucleotidase SurE.